The chain runs to 224 residues: ATP synthase subunit a (224 aa).

A run of 6 helical transmembrane segments spans residues 17 to 37 (LSLN…IYWL), 72 to 92 (IFIS…FPYI), 99 to 119 (LTLT…YGWI), 125 to 145 (MFAH…MVCI), 170 to 190 (LLLT…VTFL), and 195 to 215 (IALL…FAVL).

Belongs to the ATPase A chain family. In terms of assembly, F-type ATPases have 2 components, CF(1) - the catalytic core - and CF(0) - the membrane proton channel. CF(1) has five subunits: alpha(3), beta(3), gamma(1), delta(1), epsilon(1). CF(0) has three main subunits: a, b and c.

It is found in the mitochondrion inner membrane. Mitochondrial membrane ATP synthase (F(1)F(0) ATP synthase or Complex V) produces ATP from ADP in the presence of a proton gradient across the membrane which is generated by electron transport complexes of the respiratory chain. F-type ATPases consist of two structural domains, F(1) - containing the extramembraneous catalytic core and F(0) - containing the membrane proton channel, linked together by a central stalk and a peripheral stalk. During catalysis, ATP synthesis in the catalytic domain of F(1) is coupled via a rotary mechanism of the central stalk subunits to proton translocation. Key component of the proton channel; it may play a direct role in the translocation of protons across the membrane. This Drosophila mauritiana (Fruit fly) protein is ATP synthase subunit a (mt:ATPase6).